A 197-amino-acid polypeptide reads, in one-letter code: Lipoprotein signal peptidase (197 aa).

Helical transmembrane passes span Ser-73 to Ile-93 and Thr-97 to Asp-117. Active-site residues include Asp-126 and Asp-144. The chain crosses the membrane as a helical span at residues Tyr-135–Ile-155.

It belongs to the peptidase A8 family.

It localises to the cell inner membrane. The enzyme catalyses Release of signal peptides from bacterial membrane prolipoproteins. Hydrolyzes -Xaa-Yaa-Zaa-|-(S,diacylglyceryl)Cys-, in which Xaa is hydrophobic (preferably Leu), and Yaa (Ala or Ser) and Zaa (Gly or Ala) have small, neutral side chains.. The protein operates within protein modification; lipoprotein biosynthesis (signal peptide cleavage). This protein specifically catalyzes the removal of signal peptides from prolipoproteins. In Rickettsia felis (strain ATCC VR-1525 / URRWXCal2) (Rickettsia azadi), this protein is Lipoprotein signal peptidase.